Here is a 147-residue protein sequence, read N- to C-terminus: Small ribosomal subunit protein uS12 (147 aa).

This sequence belongs to the universal ribosomal protein uS12 family. In terms of assembly, part of the 30S ribosomal subunit.

Functionally, with S4 and S5 plays an important role in translational accuracy. Located at the interface of the 30S and 50S subunits. In Thermococcus celer, this protein is Small ribosomal subunit protein uS12.